A 250-amino-acid chain; its full sequence is Coproheme decarboxylase (250 aa).

Residues Arg131, 145–149, His172, and Gln185 contribute to the Fe-coproporphyrin III site; that span reads YPMNK. The active site involves Tyr145.

The protein belongs to the ChdC family. Type 1 subfamily. Fe-coproporphyrin III serves as cofactor.

The enzyme catalyses Fe-coproporphyrin III + 2 H2O2 + 2 H(+) = heme b + 2 CO2 + 4 H2O. It carries out the reaction Fe-coproporphyrin III + H2O2 + H(+) = harderoheme III + CO2 + 2 H2O. It catalyses the reaction harderoheme III + H2O2 + H(+) = heme b + CO2 + 2 H2O. It functions in the pathway porphyrin-containing compound metabolism; protoheme biosynthesis. Its function is as follows. Involved in coproporphyrin-dependent heme b biosynthesis. Catalyzes the decarboxylation of Fe-coproporphyrin III (coproheme) to heme b (protoheme IX), the last step of the pathway. The reaction occurs in a stepwise manner with a three-propionate intermediate. This chain is Coproheme decarboxylase, found in Staphylococcus aureus (strain MSSA476).